The chain runs to 124 residues: Small ribosomal subunit protein uS12 (124 aa).

It belongs to the universal ribosomal protein uS12 family. As to quaternary structure, part of the 30S ribosomal subunit. Contacts proteins S8 and S17. May interact with IF1 in the 30S initiation complex.

In terms of biological role, with S4 and S5 plays an important role in translational accuracy. Its function is as follows. Interacts with and stabilizes bases of the 16S rRNA that are involved in tRNA selection in the A site and with the mRNA backbone. Located at the interface of the 30S and 50S subunits, it traverses the body of the 30S subunit contacting proteins on the other side and probably holding the rRNA structure together. The combined cluster of proteins S8, S12 and S17 appears to hold together the shoulder and platform of the 30S subunit. The protein is Small ribosomal subunit protein uS12 of Photorhabdus laumondii subsp. laumondii (strain DSM 15139 / CIP 105565 / TT01) (Photorhabdus luminescens subsp. laumondii).